We begin with the raw amino-acid sequence, 210 residues long: Cytochrome c4 (210 aa).

An N-terminal signal peptide occupies residues 1-20 (MNKALVTLLLTLGITGLAHA). Heme c is bound by residues Cys-34, Cys-37, His-38, Met-86, Cys-139, Cys-142, His-143, and Met-187.

In terms of processing, binds 2 heme c groups covalently per subunit.

It is found in the periplasm. Diheme, high potential cytochrome c believed to be an intermediate electron donor to terminal oxidation systems. This is Cytochrome c4 (cycA) from Azotobacter vinelandii.